We begin with the raw amino-acid sequence, 643 residues long: Protein ecdysoneless homolog (643 aa).

2 disordered regions span residues 428 to 458 (EFYN…NNFD) and 501 to 600 (IESM…FTPV). Positions 446 to 456 (AGSSSDANMNN) are enriched in polar residues. The segment covering 528-543 (MDFDDVEDDSEGEESN) has biased composition (acidic residues). A compositionally biased stretch (polar residues) spans 564 to 580 (NSTLEKSFENVNQQHSS). Residues 581–592 (KQNEESSKTRDE) are compositionally biased toward basic and acidic residues.

The protein belongs to the ECD family.

The chain is Protein ecdysoneless homolog from Arabidopsis thaliana (Mouse-ear cress).